Here is a 105-residue protein sequence, read N- to C-terminus: Iron-sulfur cluster assembly protein CyaY (105 aa).

This sequence belongs to the frataxin family.

Involved in iron-sulfur (Fe-S) cluster assembly. May act as a regulator of Fe-S biogenesis. The sequence is that of Iron-sulfur cluster assembly protein CyaY from Psychromonas ingrahamii (strain DSM 17664 / CCUG 51855 / 37).